Here is an 87-residue protein sequence, read N- to C-terminus: MVRSRWKGIYVAKELQNYNTVSNPTIVTTERSSVIIPYYLSKTIYVYNGRKYVGVKITEKSLGRKLGEYVLTKKVEKYKASKKVKKK.

The protein belongs to the universal ribosomal protein uS19 family.

It localises to the mitochondrion. The protein is Small ribosomal subunit protein uS19m (mrps19) of Dictyostelium citrinum (Slime mold).